The primary structure comprises 107 residues: UPF0235 protein RPC_0058 (107 aa).

Belongs to the UPF0235 family.

In Rhodopseudomonas palustris (strain BisB18), this protein is UPF0235 protein RPC_0058.